The sequence spans 392 residues: Elongation factor Tu (392 aa).

The tr-type G domain occupies K10–I202. The segment at G19–T26 is G1. G19 to T26 is a GTP binding site. Residue T26 coordinates Mg(2+). The interval G60 to N64 is G2. The G3 stretch occupies residues D81–G84. GTP is bound by residues D81 to H85 and N136 to D139. Residues N136–D139 form a G4 region. A G5 region spans residues S174–L176.

This sequence belongs to the TRAFAC class translation factor GTPase superfamily. Classic translation factor GTPase family. EF-Tu/EF-1A subfamily. As to quaternary structure, monomer.

The protein localises to the cytoplasm. The catalysed reaction is GTP + H2O = GDP + phosphate + H(+). GTP hydrolase that promotes the GTP-dependent binding of aminoacyl-tRNA to the A-site of ribosomes during protein biosynthesis. The sequence is that of Elongation factor Tu from Apple proliferation phytoplasma.